The following is a 425-amino-acid chain: Enolase (425 aa).

Gln163 is a binding site for (2R)-2-phosphoglycerate. Catalysis depends on Glu205, which acts as the Proton donor. Positions 242, 285, and 312 each coordinate Mg(2+). Residues Lys337, Arg366, Ser367, and Lys388 each contribute to the (2R)-2-phosphoglycerate site. The active-site Proton acceptor is the Lys337.

This sequence belongs to the enolase family. Mg(2+) is required as a cofactor.

The protein resides in the cytoplasm. It localises to the secreted. It is found in the cell surface. The enzyme catalyses (2R)-2-phosphoglycerate = phosphoenolpyruvate + H2O. It functions in the pathway carbohydrate degradation; glycolysis; pyruvate from D-glyceraldehyde 3-phosphate: step 4/5. Functionally, catalyzes the reversible conversion of 2-phosphoglycerate (2-PG) into phosphoenolpyruvate (PEP). It is essential for the degradation of carbohydrates via glycolysis. This chain is Enolase, found in Jannaschia sp. (strain CCS1).